The primary structure comprises 230 residues: Somatolactin (230 aa).

A signal peptide spans 1–23; the sequence is MIKTKVLQAWMGIWLCAVNGLLG. 3 cysteine pairs are disulfide-bonded: Cys28–Cys38, Cys87–Cys202, and Cys219–Cys227. The N-linked (GlcNAc...) asparagine glycan is linked to Asn177.

The protein belongs to the somatotropin/prolactin family.

Its subcellular location is the secreted. The chain is Somatolactin from Ictalurus punctatus (Channel catfish).